A 706-amino-acid chain; its full sequence is K(+)-insensitive pyrophosphate-energized proton pump (706 aa).

Helical transmembrane passes span 1 to 21 (MTALWLIVLCGVLSVVYAIWA), 62 to 82 (IVIFVLLVYFLGFYVAIGFAI), 83 to 103 (GAILSGAAGFIGMNVSVRANV), 128 to 148 (GMLVAGLALLGVTLYFGFLVY), and 164 to 184 (VALGFGASLISIFARLGGGIF). Lys-186 is a binding site for substrate. Asp-189, Asp-193, Asn-216, and Asp-219 together coordinate Mg(2+). Helical transmembrane passes span 231 to 251 (LFETYAVTAVATMVLAAIFFA), 261 to 281 (TLPLAIGGICIITSIIGTFFV), 298 to 318 (IATGVLSLIGIAVVIYTLIGF), 328 to 348 (GMSLFECGVVGLIVTALIIWI), 376 to 398 (IQGLAISMEATALPAIVIIAGIL), and 412 to 432 (ATATMLALAGMIVALDAFGPV). Asp-434 lines the Mg(2+) pocket. The next 4 helical transmembrane spans lie at 465 to 485 (AVTKGYAIGSAGLGALVLFAA), 516 to 536 (YVVVGLLFGGLLPYLFGAMGM), 585 to 605 (IIPSLLPVLSPIVVYFLIYAI), and 616 to 636 (AFSAVGAMLLGVIVTGLFVAI). Asp-646, Asp-672, and Asp-676 together coordinate Ca(2+). A substrate-binding site is contributed by Lys-679. The chain crosses the membrane as a helical span at residues 685–705 (AVNPMIKITNIVALLLLAILA).

The protein belongs to the H(+)-translocating pyrophosphatase (TC 3.A.10) family. K(+)-insensitive subfamily. Homodimer. The cofactor is Mg(2+).

Its subcellular location is the cell inner membrane. The enzyme catalyses diphosphate + H2O + H(+)(in) = 2 phosphate + 2 H(+)(out). In terms of biological role, proton pump that utilizes the energy of pyrophosphate hydrolysis as the driving force for proton movement across the membrane. Generates a proton motive force. The chain is K(+)-insensitive pyrophosphate-energized proton pump from Bradyrhizobium diazoefficiens (strain JCM 10833 / BCRC 13528 / IAM 13628 / NBRC 14792 / USDA 110).